Consider the following 511-residue polypeptide: Lysine--tRNA ligase (511 aa).

Mg(2+) is bound by residues glutamate 421 and glutamate 428.

It belongs to the class-II aminoacyl-tRNA synthetase family. As to quaternary structure, homodimer. Mg(2+) is required as a cofactor.

Its subcellular location is the cytoplasm. It carries out the reaction tRNA(Lys) + L-lysine + ATP = L-lysyl-tRNA(Lys) + AMP + diphosphate. The polypeptide is Lysine--tRNA ligase (Janthinobacterium sp. (strain Marseille) (Minibacterium massiliensis)).